A 453-amino-acid chain; its full sequence is Signal recognition particle protein (453 aa).

Residues 107-114 (GLQGAGKT), 190-194 (DTAGR), and 248-251 (TKVD) contribute to the GTP site.

It belongs to the GTP-binding SRP family. SRP54 subfamily. Part of the signal recognition particle protein translocation system, which is composed of SRP and FtsY. SRP is a ribonucleoprotein composed of Ffh and a 4.5S RNA molecule.

It localises to the cytoplasm. The catalysed reaction is GTP + H2O = GDP + phosphate + H(+). Functionally, involved in targeting and insertion of nascent membrane proteins into the cytoplasmic membrane. Binds to the hydrophobic signal sequence of the ribosome-nascent chain (RNC) as it emerges from the ribosomes. The SRP-RNC complex is then targeted to the cytoplasmic membrane where it interacts with the SRP receptor FtsY. Interaction with FtsY leads to the transfer of the RNC complex to the Sec translocase for insertion into the membrane, the hydrolysis of GTP by both Ffh and FtsY, and the dissociation of the SRP-FtsY complex into the individual components. The protein is Signal recognition particle protein of Escherichia coli O157:H7.